Consider the following 462-residue polypeptide: A-type ATP synthase subunit B (462 aa).

Belongs to the ATPase alpha/beta chains family. As to quaternary structure, has multiple subunits with at least A(3), B(3), C, D, E, F, H, I and proteolipid K(x).

It localises to the cell membrane. Its function is as follows. Component of the A-type ATP synthase that produces ATP from ADP in the presence of a proton gradient across the membrane. The B chain is a regulatory subunit. The sequence is that of A-type ATP synthase subunit B from Methanococcus maripaludis (strain C5 / ATCC BAA-1333).